Here is a 495-residue protein sequence, read N- to C-terminus: PXA domain protein 1 (495 aa).

A PXA domain is found at 1–174 (MAKLSSLLNP…KFIIYLSKAI (174 aa)). A run of 2 helical transmembrane segments spans residues 7-27 (LLNP…YSGI) and 235-255 (WFFF…FVAE). 2 stretches are compositionally biased toward polar residues: residues 402 to 419 (AVSS…QRSF) and 427 to 436 (DSQTPSENSA). A disordered region spans residues 402 to 436 (AVSSPTKANTNKSHQRSFSIPKATKDSQTPSENSA). The helical transmembrane segment at 446–466 (AYSQIPVIPFFLPSDKLIMLV) threads the bilayer.

The protein localises to the endosome membrane. Its function is as follows. Required for required for normal vacuolar morphology and for vacuolar protein transport. Also required for endosome-to-Golgi protein transport. This chain is PXA domain protein 1 (pxa1), found in Schizosaccharomyces pombe (strain 972 / ATCC 24843) (Fission yeast).